A 364-amino-acid polypeptide reads, in one-letter code: MKFNKVLENIQTYEAGKPIELVVREFGIAPKDVVKLASNENPIGTNPAITKVIRSNADIAHLYPDDSMFELKEALSRKFDVEDENIIIGAGSDQVLEFISRALLNEASSVLMSAVTFAMYEIYAKQMGAKIIRTESYEHKYDEFIEAYHTYKPKIIYICTPNNPTGDATSREEVLKIIEGVDKDTLVVVDGAYMEYAAAKDQKHAIAPTDLLKYENVIYLGTFSKAHGLGGMRVGYGIAQAKLIKELYKMRPPFNITTLSLLVAIEACKDDSFVEASIALHQEQIKRYETFAKENGISYIESYTNFITYLFDENLDSTQISDALLKRGVIIRNLASYGMNGVRITIGTEVQNDVFFRHFAEVIS.

At K225 the chain carries N6-(pyridoxal phosphate)lysine.

The protein belongs to the class-II pyridoxal-phosphate-dependent aminotransferase family. Histidinol-phosphate aminotransferase subfamily. As to quaternary structure, homodimer. Requires pyridoxal 5'-phosphate as cofactor.

It carries out the reaction L-histidinol phosphate + 2-oxoglutarate = 3-(imidazol-4-yl)-2-oxopropyl phosphate + L-glutamate. The protein operates within amino-acid biosynthesis; L-histidine biosynthesis; L-histidine from 5-phospho-alpha-D-ribose 1-diphosphate: step 7/9. The chain is Histidinol-phosphate aminotransferase from Sulfurovum sp. (strain NBC37-1).